The sequence spans 527 residues: BTB/POZ domain-containing protein At4g01160 (527 aa).

One can recognise a BTB domain in the interval 111 to 180; sequence NNNTSVLSVQ…MYSNSLSVTA (70 aa). Positions 233-327 constitute a BACK domain; sequence VKPLTNAARQ…HMTTDRLKKI (95 aa).

The protein operates within protein modification; protein ubiquitination. Its function is as follows. May act as a substrate-specific adapter of an E3 ubiquitin-protein ligase complex (CUL3-RBX1-BTB) which mediates the ubiquitination and subsequent proteasomal degradation of target proteins. The chain is BTB/POZ domain-containing protein At4g01160 from Arabidopsis thaliana (Mouse-ear cress).